The following is a 160-amino-acid chain: 3-hydroxyacyl-[acyl-carrier-protein] dehydratase FabZ (160 aa).

His63 is an active-site residue.

It belongs to the thioester dehydratase family. FabZ subfamily.

It localises to the cytoplasm. The enzyme catalyses a (3R)-hydroxyacyl-[ACP] = a (2E)-enoyl-[ACP] + H2O. Functionally, involved in unsaturated fatty acids biosynthesis. Catalyzes the dehydration of short chain beta-hydroxyacyl-ACPs and long chain saturated and unsaturated beta-hydroxyacyl-ACPs. This chain is 3-hydroxyacyl-[acyl-carrier-protein] dehydratase FabZ, found in Xylella fastidiosa (strain M23).